Consider the following 138-residue polypeptide: Augmin complex subunit msd1 (138 aa).

In terms of assembly, component of the augmin complex composed of dgt2, dgt3, dgt4, dgt5, dgt6, msd1, msd5 and wac. The complex interacts directly or indirectly with microtubules and is required for centrosome-independent generation of spindle microtubules.

The protein localises to the cytoplasm. Its subcellular location is the cytoskeleton. It is found in the spindle. Functionally, as part of the augmin complex, plays a role in centrosome-independent generation of spindle microtubules. The complex is required for mitotic spindle assembly through its involvement in localizing gamma-tubulin to spindle microtubules. msd1 is required for microtubule nucleation from within the mitotic spindle and for localization of Grip71 to centrosomes and mitotic spindle. This is Augmin complex subunit msd1 from Drosophila melanogaster (Fruit fly).